The sequence spans 367 residues: Sigma54-dependent transcriptional regulator SfnR (367 aa).

The region spanning 21–250 (QVFEDPKSQA…LENVIHHTLL (230 aa)) is the Sigma-54 factor interaction domain. ATP contacts are provided by residues 49–56 (GETGTGKE) and 112–121 (ADGGTLFLDE).

Involved in the dimethyl sulfide degradation pathway. Activates the expression of sfnG and sfnF. This is Sigma54-dependent transcriptional regulator SfnR from Pseudomonas fluorescens (strain Pf0-1).